Here is a 261-residue protein sequence, read N- to C-terminus: DNA repair protein RecO (261 aa).

Belongs to the RecO family.

In terms of biological role, involved in DNA repair and RecF pathway recombination. The protein is DNA repair protein RecO of Chlorobium phaeobacteroides (strain DSM 266 / SMG 266 / 2430).